Reading from the N-terminus, the 324-residue chain is Sex-lethal homolog (324 aa).

2 consecutive RRM domains span residues 102–180 (TNLI…YARP) and 188–268 (TNLY…LAEE).

As to expression, expressed in somatic cells of both sexes throughout development, but not in the pole cells which are the progenitors of the germline.

It is found in the nucleus. Unknown; apparently not involved in somatic sex determination. This Musca domestica (House fly) protein is Sex-lethal homolog (SXL).